A 61-amino-acid chain; its full sequence is Small ribosomal subunit protein uS14 (61 aa).

Residues cysteine 24, cysteine 27, cysteine 40, and cysteine 43 each coordinate Zn(2+).

It belongs to the universal ribosomal protein uS14 family. Zinc-binding uS14 subfamily. Part of the 30S ribosomal subunit. Contacts proteins S3 and S10. It depends on Zn(2+) as a cofactor.

In terms of biological role, binds 16S rRNA, required for the assembly of 30S particles and may also be responsible for determining the conformation of the 16S rRNA at the A site. The sequence is that of Small ribosomal subunit protein uS14 from Geobacillus thermodenitrificans (strain NG80-2).